Reading from the N-terminus, the 231-residue chain is 2-C-methyl-D-erythritol 4-phosphate cytidylyltransferase (231 aa).

It belongs to the IspD/TarI cytidylyltransferase family. IspD subfamily.

The enzyme catalyses 2-C-methyl-D-erythritol 4-phosphate + CTP + H(+) = 4-CDP-2-C-methyl-D-erythritol + diphosphate. It participates in isoprenoid biosynthesis; isopentenyl diphosphate biosynthesis via DXP pathway; isopentenyl diphosphate from 1-deoxy-D-xylulose 5-phosphate: step 2/6. Functionally, catalyzes the formation of 4-diphosphocytidyl-2-C-methyl-D-erythritol from CTP and 2-C-methyl-D-erythritol 4-phosphate (MEP). The protein is 2-C-methyl-D-erythritol 4-phosphate cytidylyltransferase of Lysinibacillus sphaericus (strain C3-41).